The sequence spans 389 residues: Probable serine/threonine-protein kinase PBL11 (389 aa).

Residue Gly2 is the site of N-myristoyl glycine attachment. Cys4 carries the S-palmitoyl cysteine lipid modification. Positions 68-353 (FRPDSVVGEG…NEIVKTMEEL (286 aa)) constitute a Protein kinase domain. Residues 74–82 (VGEGGFGCV) and Lys106 contribute to the ATP site. Position 151 is a phosphotyrosine (Tyr151). The Proton acceptor role is filled by Asp203. Phosphoserine occurs at positions 207 and 237. A phosphothreonine mark is found at Thr238 and Thr243. Tyr251 is subject to Phosphotyrosine.

It belongs to the protein kinase superfamily. Ser/Thr protein kinase family. In terms of tissue distribution, roots, leaves and stems.

Its subcellular location is the cell membrane. It carries out the reaction L-seryl-[protein] + ATP = O-phospho-L-seryl-[protein] + ADP + H(+). The catalysed reaction is L-threonyl-[protein] + ATP = O-phospho-L-threonyl-[protein] + ADP + H(+). May play a role in the regulation of plant growth and development. May be involved in plant defense signaling. The chain is Probable serine/threonine-protein kinase PBL11 from Arabidopsis thaliana (Mouse-ear cress).